Reading from the N-terminus, the 393-residue chain is NAD(P)H-quinone oxidoreductase subunit H, chloroplastic (393 aa).

The protein belongs to the complex I 49 kDa subunit family. In terms of assembly, NDH is composed of at least 16 different subunits, 5 of which are encoded in the nucleus.

It is found in the plastid. The protein localises to the chloroplast thylakoid membrane. The enzyme catalyses a plastoquinone + NADH + (n+1) H(+)(in) = a plastoquinol + NAD(+) + n H(+)(out). It catalyses the reaction a plastoquinone + NADPH + (n+1) H(+)(in) = a plastoquinol + NADP(+) + n H(+)(out). Its function is as follows. NDH shuttles electrons from NAD(P)H:plastoquinone, via FMN and iron-sulfur (Fe-S) centers, to quinones in the photosynthetic chain and possibly in a chloroplast respiratory chain. The immediate electron acceptor for the enzyme in this species is believed to be plastoquinone. Couples the redox reaction to proton translocation, and thus conserves the redox energy in a proton gradient. This is NAD(P)H-quinone oxidoreductase subunit H, chloroplastic from Jasminum nudiflorum (Winter jasmine).